The primary structure comprises 306 residues: Pantothenate kinase (306 aa).

ATP is bound at residue 91 to 98 (GSVAVGKS).

It belongs to the prokaryotic pantothenate kinase family.

Its subcellular location is the cytoplasm. It catalyses the reaction (R)-pantothenate + ATP = (R)-4'-phosphopantothenate + ADP + H(+). The protein operates within cofactor biosynthesis; coenzyme A biosynthesis; CoA from (R)-pantothenate: step 1/5. This chain is Pantothenate kinase, found in Streptococcus equi subsp. equi (strain 4047).